Consider the following 180-residue polypeptide: MFHATTILAYKGKNKSVIGGDGQVSFGNTVLKGNAVKIRKIKDGKVLAGFAGSTADAFNLFDMFEENLEHAKGDLLKAVIEFSKAWRKDKYLRKLEAMMLVLNREKIFLLSGTGDVVEPEDGKIAAIGSGGNFALSAARALDKFADIDEEKLVKESLTIAGEICIYTNTNIKTYVIEDEK.

Residue Thr-5 is part of the active site. Na(+)-binding residues include Gly-161, Cys-164, and Thr-167.

It belongs to the peptidase T1B family. HslV subfamily. In terms of assembly, a double ring-shaped homohexamer of HslV is capped on each side by a ring-shaped HslU homohexamer. The assembly of the HslU/HslV complex is dependent on binding of ATP.

Its subcellular location is the cytoplasm. The catalysed reaction is ATP-dependent cleavage of peptide bonds with broad specificity.. Allosterically activated by HslU binding. Functionally, protease subunit of a proteasome-like degradation complex believed to be a general protein degrading machinery. The polypeptide is ATP-dependent protease subunit HslV (Campylobacter curvus (strain 525.92)).